The following is a 603-amino-acid chain: Polypeptide N-acetylgalactosaminyltransferase 10 (603 aa).

Residues 1–11 lie on the Cytoplasmic side of the membrane; that stretch reads MRRKEKRLLQA. The helical; Signal-anchor for type II membrane protein transmembrane segment at 12-31 threads the bilayer; that stretch reads VALALAALVLLPNVGLWALY. Topologically, residues 32-603 are lumenal; sequence RERQPDGSPG…STVLENFNRN (572 aa). N-linked (GlcNAc...) asparagine glycosylation is found at N124 and N146. 5 disulfides stabilise this stretch: C135–C365, C356–C432, C471–C488, C523–C538, and C563–C578. Positions 144–253 are catalytic subdomain A; that stretch reads LPNTSIIIPF…VNWLPPLLDR (110 aa). Substrate-binding residues include D185 and R214. D237 is a Mn(2+) binding site. S238 is a substrate binding site. Residue H239 participates in Mn(2+) binding. Residues 311–373 are catalytic subdomain B; the sequence is PFESPVMAGG…PCSRVGHIYR (63 aa). W342 contributes to the substrate binding site. H370 contributes to the Mn(2+) binding site. Substrate contacts are provided by R373 and Y378. Residues 373–384 are flexible loop; the sequence is RKYVPYKVPAGV. A Ricin B-type lectin domain is found at 458 to 590; the sequence is AAWGEIRNVG…SSLTQQWLFE (133 aa). Residue N593 is glycosylated (N-linked (GlcNAc...) asparagine).

The protein belongs to the glycosyltransferase 2 family. GalNAc-T subfamily. Mn(2+) is required as a cofactor. Highly expressed in the sublingual gland, testis, small intestine, colon and ovary. Expressed at intermediate level in heart, brain, spleen, lung, stomach, cervix and uterus.

It is found in the golgi apparatus membrane. It catalyses the reaction L-seryl-[protein] + UDP-N-acetyl-alpha-D-galactosamine = a 3-O-[N-acetyl-alpha-D-galactosaminyl]-L-seryl-[protein] + UDP + H(+). The enzyme catalyses L-threonyl-[protein] + UDP-N-acetyl-alpha-D-galactosamine = a 3-O-[N-acetyl-alpha-D-galactosaminyl]-L-threonyl-[protein] + UDP + H(+). It participates in protein modification; protein glycosylation. In terms of biological role, catalyzes the initial reaction in O-linked oligosaccharide biosynthesis, the transfer of an N-acetyl-D-galactosamine residue to a serine or threonine residue on the protein receptor. Has activity toward Muc5Ac and EA2 peptide substrates. The polypeptide is Polypeptide N-acetylgalactosaminyltransferase 10 (Galnt10) (Rattus norvegicus (Rat)).